The primary structure comprises 251 residues: Ubiquinone/menaquinone biosynthesis C-methyltransferase UbiE (251 aa).

Residues threonine 74, aspartate 95, 123 to 124, and serine 140 contribute to the S-adenosyl-L-methionine site; that span reads NA.

It belongs to the class I-like SAM-binding methyltransferase superfamily. MenG/UbiE family.

The enzyme catalyses a 2-demethylmenaquinol + S-adenosyl-L-methionine = a menaquinol + S-adenosyl-L-homocysteine + H(+). It catalyses the reaction a 2-methoxy-6-(all-trans-polyprenyl)benzene-1,4-diol + S-adenosyl-L-methionine = a 5-methoxy-2-methyl-3-(all-trans-polyprenyl)benzene-1,4-diol + S-adenosyl-L-homocysteine + H(+). It functions in the pathway quinol/quinone metabolism; menaquinone biosynthesis; menaquinol from 1,4-dihydroxy-2-naphthoate: step 2/2. It participates in cofactor biosynthesis; ubiquinone biosynthesis. Its function is as follows. Methyltransferase required for the conversion of demethylmenaquinol (DMKH2) to menaquinol (MKH2) and the conversion of 2-polyprenyl-6-methoxy-1,4-benzoquinol (DDMQH2) to 2-polyprenyl-3-methyl-6-methoxy-1,4-benzoquinol (DMQH2). The chain is Ubiquinone/menaquinone biosynthesis C-methyltransferase UbiE from Citrobacter koseri (strain ATCC BAA-895 / CDC 4225-83 / SGSC4696).